A 147-amino-acid chain; its full sequence is Myoglobin (147 aa).

Residues 2–141 (ADFDAVLKCW…IIADLEANYK (140 aa)) form the Globin domain. Position 60 (His-60) interacts with nitrite. His-60 serves as a coordination point for O2. His-89 is a binding site for heme b.

This sequence belongs to the globin family. As to quaternary structure, monomeric.

Its subcellular location is the cytoplasm. The protein resides in the sarcoplasm. It carries out the reaction Fe(III)-heme b-[protein] + nitric oxide + H2O = Fe(II)-heme b-[protein] + nitrite + 2 H(+). The enzyme catalyses H2O2 + AH2 = A + 2 H2O. In terms of biological role, monomeric heme protein which primary function is to store oxygen and facilitate its diffusion within muscle tissues. Reversibly binds oxygen through a pentacoordinated heme iron and enables its timely and efficient release as needed during periods of heightened demand. Depending on the oxidative conditions of tissues and cells, and in addition to its ability to bind oxygen, it also has a nitrite reductase activity whereby it regulates the production of bioactive nitric oxide. Under stress conditions, like hypoxia and anoxia, it also protects cells against reactive oxygen species thanks to its pseudoperoxidase activity. The chain is Myoglobin (mb) from Thunnus alalunga (Albacore).